The sequence spans 195 residues: Imidazoleglycerol-phosphate dehydratase (195 aa).

Belongs to the imidazoleglycerol-phosphate dehydratase family.

It localises to the cytoplasm. It catalyses the reaction D-erythro-1-(imidazol-4-yl)glycerol 3-phosphate = 3-(imidazol-4-yl)-2-oxopropyl phosphate + H2O. Its pathway is amino-acid biosynthesis; L-histidine biosynthesis; L-histidine from 5-phospho-alpha-D-ribose 1-diphosphate: step 6/9. The polypeptide is Imidazoleglycerol-phosphate dehydratase (Bacillus cytotoxicus (strain DSM 22905 / CIP 110041 / 391-98 / NVH 391-98)).